A 116-amino-acid chain; its full sequence is MVSKQPRKQRKARFNAPLHMRQRFMHAMLSPELRKEYKKRSAQVKKGDTVKVMRGDNAGVEGEVLSVDLKRCVITVAGVSNFRADGTEVPRPIHPSNVMITKLDLDDDEREKIFSR.

This sequence belongs to the universal ribosomal protein uL24 family. As to quaternary structure, part of the 50S ribosomal subunit.

Functionally, one of two assembly initiator proteins, it binds directly to the 5'-end of the 23S rRNA, where it nucleates assembly of the 50S subunit. Its function is as follows. Located at the polypeptide exit tunnel on the outside of the subunit. The polypeptide is Large ribosomal subunit protein uL24 (Methanothrix thermoacetophila (strain DSM 6194 / JCM 14653 / NBRC 101360 / PT) (Methanosaeta thermophila)).